Here is a 436-residue protein sequence, read N- to C-terminus: Chromosomal replication initiator protein DnaA (436 aa).

The interval 1-69 (MLADEILELL…AYLYEVKTGK (69 aa)) is domain I, interacts with DnaA modulators. The interval 69–99 (KKPEVEITSQTKLKNIKQNQVNVKQIKAQSS) is domain II. A domain III, AAA+ region region spans residues 100 to 314 (ILNPGYTFEN…GAIINLNAYA (215 aa)). Positions 144, 146, 147, and 148 each coordinate ATP. Residues 315-436 (SLMRVEITLE…EIKNKILTKG (122 aa)) form a domain IV, binds dsDNA region.

This sequence belongs to the DnaA family. As to quaternary structure, oligomerizes as a right-handed, spiral filament on DNA at oriC.

Its subcellular location is the cytoplasm. In terms of biological role, plays an essential role in the initiation and regulation of chromosomal replication. ATP-DnaA binds to the origin of replication (oriC) to initiate formation of the DNA replication initiation complex once per cell cycle. Binds the DnaA box (a 9 base pair repeat at the origin) and separates the double-stranded (ds)DNA. Forms a right-handed helical filament on oriC DNA; dsDNA binds to the exterior of the filament while single-stranded (ss)DNA is stabiized in the filament's interior. The ATP-DnaA-oriC complex binds and stabilizes one strand of the AT-rich DNA unwinding element (DUE), permitting loading of DNA polymerase. After initiation quickly degrades to an ADP-DnaA complex that is not apt for DNA replication. Binds acidic phospholipids. This is Chromosomal replication initiator protein DnaA from Campylobacter concisus (strain 13826).